The primary structure comprises 523 residues: 2-isopropylmalate synthase (523 aa).

In terms of domain architecture, Pyruvate carboxyltransferase spans 5–267 (VIIFDTTLRD…HTAINHQEIW (263 aa)). Mn(2+) is bound by residues Asp-14, His-202, His-204, and Asn-238. The tract at residues 392 to 523 (RLDYFSVQSG…QHNENNKETV (132 aa)) is regulatory domain.

It belongs to the alpha-IPM synthase/homocitrate synthase family. LeuA type 1 subfamily. As to quaternary structure, homodimer. Requires Mn(2+) as cofactor.

It is found in the cytoplasm. It catalyses the reaction 3-methyl-2-oxobutanoate + acetyl-CoA + H2O = (2S)-2-isopropylmalate + CoA + H(+). The protein operates within amino-acid biosynthesis; L-leucine biosynthesis; L-leucine from 3-methyl-2-oxobutanoate: step 1/4. Its function is as follows. Catalyzes the condensation of the acetyl group of acetyl-CoA with 3-methyl-2-oxobutanoate (2-ketoisovalerate) to form 3-carboxy-3-hydroxy-4-methylpentanoate (2-isopropylmalate). The protein is 2-isopropylmalate synthase of Escherichia coli O127:H6 (strain E2348/69 / EPEC).